The primary structure comprises 99 residues: Small ribosomal subunit protein cS23 (99 aa).

The protein belongs to the chloroplast-specific ribosomal protein cS23 family. Part of the 30S ribosomal subunit.

The protein localises to the plastid. It is found in the chloroplast. Functionally, probably a ribosomal protein or a ribosome-associated protein. The chain is Small ribosomal subunit protein cS23 from Gracilaria tenuistipitata var. liui (Red alga).